A 193-amino-acid polypeptide reads, in one-letter code: Holliday junction branch migration complex subunit RuvA (193 aa).

The interval 1–64 (MIGRIAGTLI…EDAHLLYGFG (64 aa)) is domain I. Positions 65–143 (TAAERETFRQ…ADLGTVPGGP (79 aa)) are domain II. Positions 144–151 (AVSDDAVD) are flexible linker. Positions 151–193 (DVLNALLALGYSDKEAALAIKQVPAGTGVSEGIKLALKALSKG) are domain III.

The protein belongs to the RuvA family. In terms of assembly, homotetramer. Forms an RuvA(8)-RuvB(12)-Holliday junction (HJ) complex. HJ DNA is sandwiched between 2 RuvA tetramers; dsDNA enters through RuvA and exits via RuvB. An RuvB hexamer assembles on each DNA strand where it exits the tetramer. Each RuvB hexamer is contacted by two RuvA subunits (via domain III) on 2 adjacent RuvB subunits; this complex drives branch migration. In the full resolvosome a probable DNA-RuvA(4)-RuvB(12)-RuvC(2) complex forms which resolves the HJ.

It is found in the cytoplasm. Its function is as follows. The RuvA-RuvB-RuvC complex processes Holliday junction (HJ) DNA during genetic recombination and DNA repair, while the RuvA-RuvB complex plays an important role in the rescue of blocked DNA replication forks via replication fork reversal (RFR). RuvA specifically binds to HJ cruciform DNA, conferring on it an open structure. The RuvB hexamer acts as an ATP-dependent pump, pulling dsDNA into and through the RuvAB complex. HJ branch migration allows RuvC to scan DNA until it finds its consensus sequence, where it cleaves and resolves the cruciform DNA. The sequence is that of Holliday junction branch migration complex subunit RuvA from Ralstonia pickettii (strain 12J).